A 144-amino-acid polypeptide reads, in one-letter code: MGKKNEKIVEEAEKVEAETMEVDEQPQETPQVDDEEDLNVPSKKKMEILDPKSFEQDPSNLTLIMYEEDHTIGNSIKHILSRMDEVEFCGYNVPHPLEDKILFRVQTKDGINALEVLAKAFESVEQIFSTIRGKFEESYEQSQS.

Residues 14–47 (KVEAETMEVDEQPQETPQVDDEEDLNVPSKKKME) are disordered. Residues 18–38 (ETMEVDEQPQETPQVDDEEDL) show a composition bias toward acidic residues.

It belongs to the archaeal Rpo11/eukaryotic RPB11/RPC19 RNA polymerase subunit family. As to quaternary structure, component of the RNA polymerase I (Pol I) and RNA polymerase III (Pol III) complexes consisting of at least 13 and 17 subunits, respectively.

It localises to the nucleus. DNA-dependent RNA polymerase catalyzes the transcription of DNA into RNA using the four ribonucleoside triphosphates as substrates. Common core component of RNA polymerases I and III which synthesize ribosomal RNA precursors and small RNAs, such as 5S rRNA and tRNAs, respectively. The sequence is that of Probable DNA-directed RNA polymerases I and III subunit RPAC2 (rpac-19) from Caenorhabditis elegans.